We begin with the raw amino-acid sequence, 183 residues long: Isopentenyl-diphosphate Delta-isomerase (183 aa).

Mn(2+) is bound by residues H26 and H33. The region spanning 31–165 (SLHLAFSSWL…PWAFSPWMVS (135 aa)) is the Nudix hydrolase domain. The active site involves C68. H70 is a binding site for Mn(2+). E88 provides a ligand contact to Mg(2+). Positions 115 and 117 each coordinate Mn(2+). The active site involves E117.

Belongs to the IPP isomerase type 1 family. In terms of assembly, homodimer. Requires Mg(2+) as cofactor. Mn(2+) is required as a cofactor.

It is found in the cytoplasm. It catalyses the reaction isopentenyl diphosphate = dimethylallyl diphosphate. It participates in isoprenoid biosynthesis; dimethylallyl diphosphate biosynthesis; dimethylallyl diphosphate from isopentenyl diphosphate: step 1/1. Catalyzes the 1,3-allylic rearrangement of the homoallylic substrate isopentenyl (IPP) to its highly electrophilic allylic isomer, dimethylallyl diphosphate (DMAPP). This chain is Isopentenyl-diphosphate Delta-isomerase, found in Enterobacter sp. (strain 638).